We begin with the raw amino-acid sequence, 425 residues long: Malate transporter MleP (425 aa).

11 helical membrane-spanning segments follow: residues 11-31 (GISL…TLLG), 35-55 (LDMV…YFIG), 65-85 (LGGG…FHIV), 96-116 (FMGG…CGSI), 134-154 (IALI…MLIG), 196-216 (IFSQ…IGAL), 246-266 (IKLD…LLMA), 269-289 (ILNK…IVFI), 310-330 (VIMT…LIDL), 339-359 (WQFV…SWFL), and 401-421 (FAQM…GILI).

The protein belongs to the 2-hydroxycarboxylate transporter (2-HCT) (TC 2.A.24) family.

It localises to the cell membrane. It catalyses the reaction (S)-lactate(in) + (S)-malate(out) = (S)-lactate(out) + (S)-malate(in). The enzyme catalyses (R)-lactate(in) + (S)-malate(out) = (R)-lactate(out) + (S)-malate(in). The catalysed reaction is glycolate(in) + (S)-malate(out) = glycolate(out) + (S)-malate(in). In terms of biological role, secondary transporter involved in malolactic fermentation. Catalyzes the uptake of divalent malate into the cell coupled to the exit of monovalent lactate, a product of malate degradation (precursor/product exchange). The malate/lactate exchange is electrogenic and results in the generation of a membrane potential. Is highly selective for the S-enantiomer of malate. In the absence of lactate, MleP can also catalyze the proton-dependent transport of malate. In vitro, transports a range of substrates that contain the 2-hydroxycarboxylate motif, HO-CR(2)-COO(-), with a preference for malate, lactate and glycolate. Modification of the OH or the COO(-) groups of the 2-hydroxycarboxylate motif drastically reduces the affinity of the transporter for the substrates, indicating their relevance in substrate recognition. Significant activity is also observed with some 2-oxocarboxylates. Transports only poorly citromalate. Citrate binds to MleP but is not translocated. The sequence is that of Malate transporter MleP from Lactococcus lactis subsp. lactis (strain IL1403) (Streptococcus lactis).